A 168-amino-acid polypeptide reads, in one-letter code: Ribosome maturation factor RimP (168 aa).

This sequence belongs to the RimP family.

The protein resides in the cytoplasm. In terms of biological role, required for maturation of 30S ribosomal subunits. This chain is Ribosome maturation factor RimP, found in Bordetella bronchiseptica (strain ATCC BAA-588 / NCTC 13252 / RB50) (Alcaligenes bronchisepticus).